The chain runs to 353 residues: Putative actin-28 (353 aa).

This sequence belongs to the actin family.

The protein resides in the cytoplasm. Its subcellular location is the cytoskeleton. It catalyses the reaction ATP + H2O = ADP + phosphate + H(+). Its function is as follows. Actins are highly conserved proteins that are involved in various types of cell motility and are ubiquitously expressed in all eukaryotic cells. Multiple isoforms are involved in various cellular functions such as cytoskeleton structure, cell mobility, chromosome movement and muscle contraction. This Dictyostelium discoideum (Social amoeba) protein is Putative actin-28 (act28).